The following is a 146-amino-acid chain: Ribosome maturation factor RimP (146 aa).

The protein belongs to the RimP family.

The protein resides in the cytoplasm. Required for maturation of 30S ribosomal subunits. The polypeptide is Ribosome maturation factor RimP (Helicobacter pylori (strain HPAG1)).